The following is a 274-amino-acid chain: MQKHPTDSQNPWLELRRLTPARIALGRTGTSLPTDAQLDFQYAHAQARDAVHLPFDHAGLSAQLAERGRDSLLLHSAATDRHSYLQRPDLGRRLSDDSAQALRDYASAHPGGFDLAVVVADGLSALAVHRHTLPFLARMEEQTAAEGWSLSPVVLVEQGRVAVADEVGQLLGAKMTVILIGERPGLSSPDSLGLYFTYQPKIGLTDAYRNCISNVRLEGLSYGMAAHRLLYLMREACRRQLSGVNLKDEAQVQTLDSDEQADMKGNFLLGPPQA.

Adenosylcob(III)alamin is bound by residues V161, E182, and C211.

It belongs to the EutC family. As to quaternary structure, the basic unit is a heterodimer which dimerizes to form tetramers. The heterotetramers trimerize; 6 large subunits form a core ring with 6 small subunits projecting outwards. Adenosylcob(III)alamin serves as cofactor.

The protein resides in the bacterial microcompartment. The catalysed reaction is ethanolamine = acetaldehyde + NH4(+). It functions in the pathway amine and polyamine degradation; ethanolamine degradation. Functionally, catalyzes the deamination of various vicinal amino-alcohols to oxo compounds. Allows this organism to utilize ethanolamine as the sole source of nitrogen and carbon in the presence of external vitamin B12. This chain is Ethanolamine ammonia-lyase small subunit, found in Pseudomonas fluorescens (strain ATCC BAA-477 / NRRL B-23932 / Pf-5).